A 276-amino-acid polypeptide reads, in one-letter code: Putative translation initiation factor eIF-2B subunit 2-like (276 aa).

It belongs to the eIF-2B alpha/beta/delta subunits family. As to quaternary structure, complex of two different subunits.

Catalyzes the exchange of initiation factor 2-bound GDP for GTP. The protein is Putative translation initiation factor eIF-2B subunit 2-like of Pyrococcus furiosus (strain ATCC 43587 / DSM 3638 / JCM 8422 / Vc1).